The primary structure comprises 143 residues: Ninjurin-2 (143 aa).

The Extracellular segment spans residues 1–61 (MESDRETIHL…KSVLQQGPFA (61 aa)). A helix alpha1 region spans residues 26 to 38 (NFYATKKSVAESM). The segment at 39-58 (LDVALFMSNAMRLKSVLQQG) is helix alpha2. Residues 62–93 (EYYTTLVTLIIVSLLLQVVISLLLVFIAILNL) traverse the membrane as a helical segment. Residues 94–97 (NEVE) are Cytoplasmic-facing. Residues 98-127 (NQRHLNKLNNAATILVFITVVINIFITAFG) traverse the membrane as a helical segment. Cholesterol is bound at residue Lys-104. The Extracellular segment spans residues 128-143 (AHHAASMAARTSSNPI).

It belongs to the ninjurin family. Homooligomer; in response to stimuli, homooligomerizes into filaments. In contrast to NINJ1, the filament is curved toward the intracellular space, preventing its circularization on a relatively flat membrane to mediate plasma membrane rupture: curvature is caused by cholesterol-binding at the cytoplasmic leaflet.

The protein resides in the cell membrane. In terms of biological role, its role in unclear. In contrast to NINJ1 paralog, does not mediate plasma membrane rupture (cytolysis) downstream of necroptotic and pyroptotic programmed cell death. While it is able to oligomerize and form filaments, filaments are curved toward the intracellular space, preventing circularization to mediate plasma membrane rupture. May act as a homophilic transmembrane adhesion molecule involved in nerve regeneration. Promotes axonal growth. The polypeptide is Ninjurin-2 (Ninj2) (Mus musculus (Mouse)).